Consider the following 1044-residue polypeptide: Multiple epidermal growth factor-like domains protein 11 (1044 aa).

The first 19 residues, 1–19 (MVLSLTGLIAFSFLQATLA), serve as a signal peptide directing secretion. Residues 20 to 848 (LNPEDPNVCS…SPALGAERHS (829 aa)) lie on the Extracellular side of the membrane. In terms of domain architecture, EMI spans 24–101 (DPNVCSHWES…YYESGDFCIP (78 aa)). 14 disulfide bridges follow: C28-C89, C54-C63, C88-C99, C103-C118, C120-C129, C146-C154, C148-C161, C163-C172, C185-C197, C191-C204, C206-C215, C228-C240, C234-C247, and C249-C258. 9 consecutive EGF-like domains span residues 95 to 130 (SGDFCIPLCTEECVHGRCVSPDTCHCEPGWGGPDCS), 143 to 173 (SNRCQCQNGALCNPITGACVCAAGFRGWRCE), 181 to 216 (HGKGCQLPCQCRHGASCDPRAGECLCAPGYTGVYCE), 224 to 259 (HGAHCELRCPCQNGGTCHHITGECACPPGWTGAVCA), 267 to 302 (FGQNCSQDCPCHHGGQCDHVTGQCHCTAGYMGDRCQ), 310 to 345 (FGFQCSQHCDCHNGGQCSPTTGACECEPGYKGPRCQ), 399 to 434 (YGDGCQLPCTCQNGADCHSITGGCTCAPGFMGEVCA), 442 to 477 (YGPNCSSICSCNNGGTCSPVDGSCTCKEGWQGLDCT), and 490 to 520 (NESCTCANGAACSPIDGSCSCTPGWLGDTCE). N270 is a glycosylation site (N-linked (GlcNAc...) asparagine). Cystine bridges form between C271–C283, C277–C290, C292–C301, C314–C326, C320–C333, C335–C344, C403–C415, C409–C422, C424–C433, C446–C458, C452–C465, C467–C476, C493–C501, C495–C508, and C510–C519. N531 carries N-linked (GlcNAc...) asparagine glycosylation. EGF-like domains are found at residues 571–606 (WGPNCSVSCSCENGGSCSPEDGSCECAPGFRGPLCQ), 659–694 (FGQDCAQLCSCANNGTCSPIDGSCQCFPGWIGKDCS), 707–737 (FHACSCHNGASCSAEDGACHCTPGWTGLFCT), 750–780 (GRVCQCQNGASCDHISGKCTCRTGFTGQHCE), and 788–823 (FGYGCQQLCECMNNSTCDHVTGTCYCSPGFKGIRCD). 15 cysteine pairs are disulfide-bonded: C575–C587, C581–C594, C596–C605, C663–C675, C669–C682, C684–C693, C710–C718, C712–C725, C727–C736, C753–C761, C755–C768, C770–C779, C792–C804, C798–C811, and C813–C822. The helical transmembrane segment at 849–869 (VGAVTGIMLLLFLIVVLLGLF) threads the bilayer. At 870 to 1044 (AWHRRRQKEK…ANGPSQDKQS (175 aa)) the chain is on the cytoplasmic side. Residues 1023-1044 (GHYDLLPVRQSPANGPSQDKQS) form a disordered region. A compositionally biased stretch (polar residues) spans 1033–1044 (SPANGPSQDKQS).

The protein belongs to the MEGF family. As to quaternary structure, homomer. Does not interact with MEGF10.

Its subcellular location is the cell membrane. The protein resides in the basolateral cell membrane. May regulate the mosaic spacing of specific neuron subtypes in the retina through homotypic retinal neuron repulsion. Mosaics provide a mechanism to distribute each cell type evenly across the retina, ensuring that all parts of the visual field have access to a full set of processing elements. The polypeptide is Multiple epidermal growth factor-like domains protein 11 (MEGF11) (Homo sapiens (Human)).